The chain runs to 142 residues: UPF0102 protein Bcep18194_A3391 (142 aa).

The interval 1–27 is disordered; the sequence is MCHAAPARPGDGRGLPRAGDNFSGAAR.

The protein belongs to the UPF0102 family.

This Burkholderia lata (strain ATCC 17760 / DSM 23089 / LMG 22485 / NCIMB 9086 / R18194 / 383) protein is UPF0102 protein Bcep18194_A3391.